The following is an 879-amino-acid chain: Metabotropic glutamate receptor 3 (879 aa).

The signal sequence occupies residues 1–22 (MKMLTRLQVLTLALFSKGFLLS). Topologically, residues 23–576 (LGDHNFLRRE…EDYIRWEDAW (554 aa)) are extracellular. Cysteines 57 and 99 form a disulfide. Residues Ser-151 and 172 to 174 (AST) each bind L-glutamate. Asn-209 is a glycosylation site (N-linked (GlcNAc...) asparagine). Tyr-222 serves as a coordination point for L-glutamate. Disulfide bonds link Cys-240/Cys-527, Cys-361/Cys-373, Cys-412/Cys-419, Cys-509/Cys-528, Cys-513/Cys-531, Cys-534/Cys-546, and Cys-549/Cys-562. N-linked (GlcNAc...) asparagine glycosylation occurs at Asn-292. Asp-301 provides a ligand contact to L-glutamate. Residue Lys-389 coordinates L-glutamate. Residues Asn-414 and Asn-439 are each glycosylated (N-linked (GlcNAc...) asparagine). A helical membrane pass occupies residues 577 to 599 (VIGPVTIACLGFMCTCMVVTVFI). Over 600–613 (KHNNTPLVKASGRE) the chain is Cytoplasmic. A helical transmembrane segment spans residues 614–634 (LCYILLFGVGLSYCMTFFFIA). The Extracellular segment spans residues 635–645 (KPSPVICALRR). The helical transmembrane segment at 646–664 (LGLGSSFAICYSALLTKTN) threads the bilayer. The Cytoplasmic segment spans residues 665-688 (CIARIFDGVKNGAQRPKFISPSSQ). A helical membrane pass occupies residues 689-709 (VFICLGLILVQIVMVSVWLIL). The Extracellular portion of the chain corresponds to 710–734 (EAPGTRRYTLAEKRETVILKCNVKD). Residues 735–756 (SSMLISLTYDVILVILCTVYAF) form a helical membrane-spanning segment. The Cytoplasmic segment spans residues 757–769 (KTRKCPENFNEAK). A helical membrane pass occupies residues 770–792 (FIGFTMYTTCIIWLAFLPIFYVT). Over 793–802 (SSDYRVQTTT) the chain is Extracellular. A helical transmembrane segment spans residues 803-828 (MCISVSLSGFVVLGCLFAPKVHIILF). The Cytoplasmic portion of the chain corresponds to 829 to 879 (QPQKNVVTHRLHLNRFSVSGTGTTYSQSSASTYVPTVCNGREVLDSTTSSL).

This sequence belongs to the G-protein coupled receptor 3 family. Interacts with TAMALIN.

Its subcellular location is the cell membrane. In terms of biological role, G-protein coupled receptor for glutamate. Ligand binding causes a conformation change that triggers signaling via guanine nucleotide-binding proteins (G proteins) and modulates the activity of down-stream effectors. Signaling inhibits adenylate cyclase activity. The protein is Metabotropic glutamate receptor 3 (GRM3) of Pongo abelii (Sumatran orangutan).